A 118-amino-acid chain; its full sequence is Heavy metal-associated isoprenylated plant protein 12 (118 aa).

Residues 1–65 enclose the HMA domain; it reads MQVVVLKLDV…KICHTEFISV (65 aa). Residues 68 to 87 form a disordered region; it reads VKEPEKKKPDDPKKPETKPP. Positions 69–86 are enriched in basic and acidic residues; it reads KEPEKKKPDDPKKPETKP. The residue at position 115 (cysteine 115) is a Cysteine methyl ester. Cysteine 115 is lipidated: S-farnesyl cysteine. Residues 116–118 constitute a propeptide, removed in mature form; that stretch reads VTS.

Belongs to the HIPP family.

In terms of biological role, probable heavy-metal-binding protein. This Arabidopsis thaliana (Mouse-ear cress) protein is Heavy metal-associated isoprenylated plant protein 12.